Consider the following 819-residue polypeptide: Phenylalanine--tRNA ligase beta subunit (819 aa).

The tRNA-binding domain occupies 42–154; it reads RGGLRGLVIG…SDAPVGMPAA (113 aa). The B5 domain maps to 412 to 488; sequence LKPHLISLSF…RIYGYNQVEL (77 aa). The Mg(2+) site is built by aspartate 466, aspartate 472, glutamate 475, and glutamate 476. The region spanning 726–819 is the FDX-ACB domain; the sequence is PRFPEVKRDL…LEQKLGAQLR (94 aa).

This sequence belongs to the phenylalanyl-tRNA synthetase beta subunit family. Type 1 subfamily. In terms of assembly, tetramer of two alpha and two beta subunits. Requires Mg(2+) as cofactor.

Its subcellular location is the cytoplasm. It catalyses the reaction tRNA(Phe) + L-phenylalanine + ATP = L-phenylalanyl-tRNA(Phe) + AMP + diphosphate + H(+). The chain is Phenylalanine--tRNA ligase beta subunit from Porphyromonas gingivalis (strain ATCC BAA-308 / W83).